We begin with the raw amino-acid sequence, 362 residues long: Small ribosomal subunit protein uS4m (362 aa).

The 75-residue stretch at Thr105–Ile179 folds into the S4 RNA-binding domain.

Belongs to the universal ribosomal protein uS4 family. As to quaternary structure, component of the mitochondrial ribosome small subunit.

The protein localises to the mitochondrion. The polypeptide is Small ribosomal subunit protein uS4m (RPS4) (Arabidopsis thaliana (Mouse-ear cress)).